Reading from the N-terminus, the 93-residue chain is Small ribosomal subunit protein uS19 (93 aa).

This sequence belongs to the universal ribosomal protein uS19 family.

In terms of biological role, protein S19 forms a complex with S13 that binds strongly to the 16S ribosomal RNA. This is Small ribosomal subunit protein uS19 from Clostridium acetobutylicum (strain ATCC 824 / DSM 792 / JCM 1419 / IAM 19013 / LMG 5710 / NBRC 13948 / NRRL B-527 / VKM B-1787 / 2291 / W).